We begin with the raw amino-acid sequence, 338 residues long: Fructose-1,6-bisphosphatase 1 (338 aa).

Position 2 is an N-acetylthreonine (threonine 2). Residues 18–22 and 28–32 each bind AMP; these read VMEEG and TGEMT. Mg(2+) contacts are provided by aspartate 69 and glutamate 98. Residue 113–114 participates in AMP binding; that stretch reads KY. Positions 119, 121, and 122 each coordinate Mg(2+). Residue 122 to 125 coordinates substrate; the sequence is DGSS. Lysine 141 contributes to the AMP binding site. Lysine 151 carries the post-translational modification N6-succinyllysine. Position 208 is a phosphoserine (serine 208). Substrate contacts are provided by residues 213 to 216, 244 to 249, tyrosine 265, and 275 to 277; these read NEGY, RYVGSM, and KLR. Phosphotyrosine is present on residues tyrosine 216, tyrosine 245, and tyrosine 265. Position 281 (glutamate 281) interacts with Mg(2+).

The protein belongs to the FBPase class 1 family. As to quaternary structure, homotetramer. The cofactor is Mg(2+).

It catalyses the reaction beta-D-fructose 1,6-bisphosphate + H2O = beta-D-fructose 6-phosphate + phosphate. The protein operates within carbohydrate biosynthesis; gluconeogenesis. Its activity is regulated as follows. Subject to complex allosteric regulation. The enzyme can assume an active R-state, or an inactive T-state. Intermediate conformations may exist. AMP acts as an allosteric inhibitor. AMP binding affects the turnover of bound substrate and not the affinity for substrate. Fructose 2,6-bisphosphate acts as a competitive inhibitor. Fructose 2,6-bisphosphate and AMP have synergistic effects. Catalyzes the hydrolysis of fructose 1,6-bisphosphate to fructose 6-phosphate in the presence of divalent cations, acting as a rate-limiting enzyme in gluconeogenesis. Plays a role in regulating glucose sensing and insulin secretion of pancreatic beta-cells. Appears to modulate glycerol gluconeogenesis in liver. Important regulator of appetite and adiposity; increased expression of the protein in liver after nutrient excess increases circulating satiety hormones and reduces appetite-stimulating neuropeptides and thus seems to provide a feedback mechanism to limit weight gain. In Bos taurus (Bovine), this protein is Fructose-1,6-bisphosphatase 1 (FBP1).